The chain runs to 895 residues: Serine-rich coiled-coil domain-containing protein 1 (895 aa).

Disordered regions lie at residues 1–142, 154–177, 332–394, and 459–497; these read MGDS…KEPS, SGRS…KQST, ELHS…RTLG, and RSSS…SSKM. The segment covering 43–56 has biased composition (low complexity); sequence SSSPSSTNSSSGST. The segment covering 83–102 has biased composition (polar residues); that stretch reads TEQNLSISNGAQPSHSNMQK. Positions 131 to 142 are enriched in basic and acidic residues; it reads LTEDFEREKEPS. The segment covering 348–358 has biased composition (polar residues); the sequence is SLQSTELSVGN. Positions 675-705 form a coiled coil; that stretch reads MLRLQLKDRDELISQLQAELEKVQHLQKAFA. Residues 731–753 are disordered; it reads QGGRETTHRNRTMSQSHSTRDRK.

The protein belongs to the CCSER family.

The protein is Serine-rich coiled-coil domain-containing protein 1 (Ccser1) of Mus musculus (Mouse).